The sequence spans 259 residues: Transcription factor bHLH125 (259 aa).

A bHLH domain is found at 73-125 (SKKMKHRDIERQRRQEVSSLFKRLRTLLPFQYIQGKRSTSDHIVQAVNYIKDL).

In terms of assembly, homodimer.

Its subcellular location is the nucleus. The protein is Transcription factor bHLH125 (BHLH125) of Arabidopsis thaliana (Mouse-ear cress).